A 2403-amino-acid chain; its full sequence is Highly reducing polyketide synthase fogA (2403 aa).

One can recognise a Ketosynthase family 3 (KS3) domain in the interval 3-428; sequence DDPPCIVGMA…GANAHVILES (426 aa). Residues C176, H311, and H350 each act as for beta-ketoacyl synthase activity in the active site. Positions 538–858 are malonyl-CoA:ACP transacylase (MAT) domain; the sequence is VFTGQGAQYA…PYAPSLVRKE (321 aa). S632 acts as the For malonyltransferase activity in catalysis. The segment at 929–1068 is N-terminal hotdog fold; that stretch reads HELLGTFALT…GSIRVVEPLT (140 aa). A dehydratase (DH) domain region spans residues 929 to 1238; sequence HELLGTFALT…DARMSLYTGK (310 aa). The region spanning 929–1241 is the PKS/mFAS DH domain; the sequence is HELLGTFALT…MSLYTGKSSA (313 aa). The active-site Proton acceptor; for dehydratase activity is the H961. Residues 1084-1241 form a C-terminal hotdog fold region; sequence SFEASPTNRW…MSLYTGKSSA (158 aa). The active-site Proton donor; for dehydratase activity is the D1152. Residues 1663–1981 are enoyl reductase (ER) domain; that stretch reads GATDSMFFQQ…QQDRIGKIVI (319 aa). The segment at 2006 to 2185 is ketoreductase (KR) domain; that stretch reads VYLLIGCLGG…AVAVGLGMIS (180 aa). The tract at residues 2280 to 2300 is disordered; sequence AQNSTSSSGSNSNTPTTAAPW. Residues 2282-2296 are compositionally biased toward low complexity; the sequence is NSTSSSGSNSNTPTT. Residues 2320–2398 form the Carrier domain; sequence SLNAAILRLI…GLAVVVEGKL (79 aa). S2357 carries the post-translational modification O-(pantetheine 4'-phosphoryl)serine.

Requires pantetheine 4'-phosphate as cofactor.

Its pathway is secondary metabolite biosynthesis. Functionally, highly reducing polyketide synthase; part of the gene cluster that mediates the biosynthesis of flavoglaucin and congeners (including aspergin, dihydroauroglaucin and auroglaucin), prenylated salicylaldehyde derivatives carrying a saturated or an unsaturated C-7 side chain. FogA releases the carboxylic acid (8E,10E,12E)-3,5,7-trihydroxytetradeca-8,10,12-trienoic acid as its product, as well as derivatives with one and two double bonds. FogA is indeed able to reduce the initial triketide, thus being at least partially responsible for the differently saturated heptyl side chains of flavoglaucin congeners. The oxidoreductases fogB, fogC and fogD modify the nascent polyketide in fogA-bound form and, together, fogA, fogB, fogC and fogD are necessary for the formation of the aromatic core and the cyclized PKS products are released as salicyl alcohols. In particular, fogB is responsible for oxidation of a hydroxyl group or reduction of remaining double bond(s) at the C-7 residue whereas fogD is probably involved in the reductive release of the modified PKS products. The cytochrome P450 monooxygenase fogE is then responsible for the hydroxylation at C-3 of the benzene ring. The fogE products are substrates of the prenyltransferase fogH and the prenylated benzyl alcohols are subsequently oxidized by the fogF to produce the final aryl aldehydes flavoglaucin and congeners. The short-chain dehydrogenase fogG does not seem to be involved in the biosynthesis of the prenylated salicylaldehyde derivatives. The chain is Highly reducing polyketide synthase fogA from Aspergillus ruber (strain CBS 135680).